The chain runs to 402 residues: Thyroid hormone receptor alpha (402 aa).

The segment at 1–22 is disordered; sequence MEQKPSTLDPLSEPEDTRWLDG. Positions 1–50 are modulating; it reads MEQKPSTLDPLSEPEDTRWLDGKRKRKSSQCLVKSSMSGYIPSYLDKDEQ. The residue at position 12 (Ser-12) is a Phosphoserine; by CK2. At Ser-28 the chain carries Phosphoserine. The Zn(2+) site is built by Cys-51, Cys-54, Cys-68, Cys-71, Cys-89, Cys-95, Cys-105, and Cys-108. 2 consecutive NR C4-type zinc fingers follow at residues 51-71 and 89-113; these read CVVCGDKATGYHYRCITCAGC and CKYDGCCVIDKITRNQCQLCRFKKC. The nuclear receptor DNA-binding region spans 51-125; the sequence is CVVCGDKATG…VGMAMDLVLY (75 aa). The 242-residue stretch at 161 to 402 folds into the NR LBD domain; the sequence is EEWELIHVVT…ELFPPLFLEV (242 aa). 2 residues coordinate 3,3',5-triiodo-L-thyronine: Arg-226 and Ser-275.

The protein belongs to the nuclear hormone receptor family. NR1 subfamily. In terms of assembly, probably interacts with SFPQ.

It is found in the nucleus. In terms of biological role, nuclear hormone receptor that can act as a repressor or activator of transcription. High affinity receptor for thyroid hormones, including triiodothyronine and thyroxine. In Pygoscelis adeliae (Adelie penguin), this protein is Thyroid hormone receptor alpha (THRA).